Consider the following 205-residue polypeptide: Pyridoxine/pyridoxamine 5'-phosphate oxidase (205 aa).

FMN-binding positions include 53–58, 68–69, lysine 75, and glutamine 97; these read RMVLLK and YT. Position 58 (lysine 58) interacts with substrate. 3 residues coordinate substrate: tyrosine 115, arginine 119, and serine 123. FMN-binding positions include 132–133 and tryptophan 177; that span reads QS. 183–185 lines the substrate pocket; that stretch reads RLH. Arginine 187 is an FMN binding site.

This sequence belongs to the pyridoxamine 5'-phosphate oxidase family. As to quaternary structure, homodimer. FMN is required as a cofactor.

It catalyses the reaction pyridoxamine 5'-phosphate + O2 + H2O = pyridoxal 5'-phosphate + H2O2 + NH4(+). The catalysed reaction is pyridoxine 5'-phosphate + O2 = pyridoxal 5'-phosphate + H2O2. The protein operates within cofactor metabolism; pyridoxal 5'-phosphate salvage; pyridoxal 5'-phosphate from pyridoxamine 5'-phosphate: step 1/1. Its pathway is cofactor metabolism; pyridoxal 5'-phosphate salvage; pyridoxal 5'-phosphate from pyridoxine 5'-phosphate: step 1/1. Functionally, catalyzes the oxidation of either pyridoxine 5'-phosphate (PNP) or pyridoxamine 5'-phosphate (PMP) into pyridoxal 5'-phosphate (PLP). This Mesorhizobium japonicum (strain LMG 29417 / CECT 9101 / MAFF 303099) (Mesorhizobium loti (strain MAFF 303099)) protein is Pyridoxine/pyridoxamine 5'-phosphate oxidase.